A 28-amino-acid chain; its full sequence is Kappa-buthitoxin-Tt2b (28 aa).

Disulfide bonds link C2–C24, C7–C20, and C11–C26.

As to expression, expressed by the venom gland.

It localises to the secreted. Functionally, blocks potassium channels Shaker-IR (with inactivation domain removed) and hKv1.2/KCNA2. This Tityus trivittatus (Argentinean scorpion) protein is Kappa-buthitoxin-Tt2b.